Here is a 426-residue protein sequence, read N- to C-terminus: Enolase (426 aa).

Residue Gly41 coordinates phosphoenolpyruvate. Ser43 contributes to the Mg(2+) binding site. Residue Glu165 participates in phosphoenolpyruvate binding. Positions 165 and 206 each coordinate (2R)-2-phosphoglycerate. Glu206 serves as the catalytic Proton donor. Mg(2+)-binding residues include Asp243, Glu286, and Asp313. The phosphoenolpyruvate site is built by Asp313, Lys338, Arg367, Ser368, and Lys389. Positions 338, 367, and 368 each coordinate (2R)-2-phosphoglycerate. The active-site Proton acceptor is the Lys338.

The protein belongs to the enolase family. In terms of assembly, homodimer. Mg(2+) serves as cofactor.

The protein resides in the cytoplasm. Its subcellular location is the secreted. It localises to the cell surface. It catalyses the reaction (2R)-2-phosphoglycerate = phosphoenolpyruvate + H2O. It participates in carbohydrate degradation; glycolysis; pyruvate from D-glyceraldehyde 3-phosphate: step 4/5. Catalyzes the reversible conversion of 2-phosphoglycerate (2-PG) into phosphoenolpyruvate (PEP). It is essential for the degradation of carbohydrates via glycolysis. This Chloroflexus aurantiacus (strain ATCC 29366 / DSM 635 / J-10-fl) protein is Enolase.